The primary structure comprises 1171 residues: DNA-directed RNA polymerase subunit beta (1171 aa).

The protein belongs to the RNA polymerase beta chain family. The RNAP catalytic core consists of 2 alpha, 1 beta, 1 beta' and 1 omega subunit. When a sigma factor is associated with the core the holoenzyme is formed, which can initiate transcription.

It catalyses the reaction RNA(n) + a ribonucleoside 5'-triphosphate = RNA(n+1) + diphosphate. Its function is as follows. DNA-dependent RNA polymerase catalyzes the transcription of DNA into RNA using the four ribonucleoside triphosphates as substrates. This is DNA-directed RNA polymerase subunit beta from Corynebacterium efficiens (strain DSM 44549 / YS-314 / AJ 12310 / JCM 11189 / NBRC 100395).